We begin with the raw amino-acid sequence, 84 residues long: MAYLKIVLVALMLVVAVSAMRLSDQEDQDISVAKRAACKCDDDGPDIRSATLTGTVDLGSCNEGWEKCASFYTILADCCRRPRG.

Residues 1–19 (MAYLKIVLVALMLVVAVSA) form the signal peptide. The propeptide occupies 20-33 (MRLSDQEDQDISVA). 3 disulfide bridges follow: Cys38/Cys78, Cys40/Cys68, and Cys61/Cys79. A propeptide is located at residue Gly84.

Belongs to the sea anemone sodium channel inhibitory toxin family. Type II subfamily.

The protein localises to the secreted. Its subcellular location is the nematocyst. Its function is as follows. Binds specifically to voltage-gated sodium channels (Nav), thereby delaying their inactivation during signal transduction. The sequence is that of Delta-stichotoxin-Sgt3a from Stichodactyla gigantea (Giant carpet anemone).